Here is a 105-residue protein sequence, read N- to C-terminus: UPF0145 protein lpg0197 (105 aa).

The protein belongs to the UPF0145 family.

This Legionella pneumophila subsp. pneumophila (strain Philadelphia 1 / ATCC 33152 / DSM 7513) protein is UPF0145 protein lpg0197.